A 123-amino-acid chain; its full sequence is Protein Wnt-7 (123 aa).

Residue serine 1 is the site of O-palmitoleoyl serine; by PORCN attachment. A disulfide bond links cysteine 89 and cysteine 104. Asparagine 90 is a glycosylation site (N-linked (GlcNAc...) asparagine).

It belongs to the Wnt family. Palmitoleoylation is required for efficient binding to frizzled receptors. Depalmitoleoylation leads to Wnt signaling pathway inhibition.

It is found in the secreted. It localises to the extracellular space. Its subcellular location is the extracellular matrix. Ligand for members of the frizzled family of seven transmembrane receptors. Probable developmental protein. May be a signaling molecule which affects the development of discrete regions of tissues. Is likely to signal over only few cell diameters. The protein is Protein Wnt-7 (WNT-7) of Evasterias troschelii (Mottled sea star).